We begin with the raw amino-acid sequence, 149 residues long: Alpha-amylase/trypsin inhibitor CMb (149 aa).

Positions 1–24 (MASKSSCDLLLAAVLVSIFAAVAA) are cleaved as a signal peptide. Residue N124 is glycosylated (N-linked (GlcNAc...) asparagine).

The protein belongs to the protease inhibitor I6 (cereal trypsin/alpha-amylase inhibitor) family. As to quaternary structure, heterotetramer of one CMa, one CMb and two CMd chains. Post-translationally, five disulfide bonds, which are essential for the inhibitor activity, are probably present. Exists both in a glycosylated and in an unglycosylated form. The glycosylated form is a potent allergen. Endosperm.

It localises to the secreted. Functionally, part of a complex with inhibitory activity, but CMb is inactive as a separate subunit. The polypeptide is Alpha-amylase/trypsin inhibitor CMb (IAT2) (Hordeum vulgare (Barley)).